Reading from the N-terminus, the 724-residue chain is RINT1-like protein (724 aa).

Positions 163–724 (RLHAVQAQSL…LERRMDIKMF (562 aa)) constitute an RINT1/TIP20 domain.

The protein belongs to the RINT1 family.

Its function is as follows. During cytokinesis in male meiotic cells, required for completion of cleavage furrow ingression possibly in conjunction with Zw10. Required for maintenance of Golgi stack number and morphology. Essential for acroblast assembly. This is RINT1-like protein from Drosophila melanogaster (Fruit fly).